We begin with the raw amino-acid sequence, 125 residues long: Ribonuclease P protein component (125 aa).

This sequence belongs to the RnpA family. Consists of a catalytic RNA component (M1 or rnpB) and a protein subunit.

It catalyses the reaction Endonucleolytic cleavage of RNA, removing 5'-extranucleotides from tRNA precursor.. RNaseP catalyzes the removal of the 5'-leader sequence from pre-tRNA to produce the mature 5'-terminus. It can also cleave other RNA substrates such as 4.5S RNA. The protein component plays an auxiliary but essential role in vivo by binding to the 5'-leader sequence and broadening the substrate specificity of the ribozyme. The chain is Ribonuclease P protein component from Oleidesulfovibrio alaskensis (strain ATCC BAA-1058 / DSM 17464 / G20) (Desulfovibrio alaskensis).